Consider the following 147-residue polypeptide: 3-dehydroquinate dehydratase (147 aa).

Catalysis depends on Y23, which acts as the Proton acceptor. Substrate contacts are provided by N74, H80, and D87. H100 (proton donor) is an active-site residue. Residues 101–102 (LS) and R111 each bind substrate.

This sequence belongs to the type-II 3-dehydroquinase family. As to quaternary structure, homododecamer.

The catalysed reaction is 3-dehydroquinate = 3-dehydroshikimate + H2O. It functions in the pathway metabolic intermediate biosynthesis; chorismate biosynthesis; chorismate from D-erythrose 4-phosphate and phosphoenolpyruvate: step 3/7. In terms of biological role, catalyzes a trans-dehydration via an enolate intermediate. The protein is 3-dehydroquinate dehydratase of Glaesserella parasuis serovar 5 (strain SH0165) (Haemophilus parasuis).